A 149-amino-acid polypeptide reads, in one-letter code: Urease accessory protein UreE (149 aa).

It belongs to the UreE family.

Its subcellular location is the cytoplasm. In terms of biological role, involved in urease metallocenter assembly. Binds nickel. Probably functions as a nickel donor during metallocenter assembly. The polypeptide is Urease accessory protein UreE (Synechococcus sp. (strain JA-3-3Ab) (Cyanobacteria bacterium Yellowstone A-Prime)).